The primary structure comprises 292 residues: Shikimate dehydrogenase (NADP(+)) (292 aa).

Residues 22-24 (SLS) and serine 69 contribute to the shikimate site. Lysine 73 functions as the Proton acceptor in the catalytic mechanism. Residues asparagine 94 and aspartate 111 each coordinate shikimate. NADP(+)-binding positions include 135–139 (GVGGA) and isoleucine 236. Residue tyrosine 238 participates in shikimate binding. An NADP(+)-binding site is contributed by glycine 260.

The protein belongs to the shikimate dehydrogenase family. In terms of assembly, homodimer.

It catalyses the reaction shikimate + NADP(+) = 3-dehydroshikimate + NADPH + H(+). It participates in metabolic intermediate biosynthesis; chorismate biosynthesis; chorismate from D-erythrose 4-phosphate and phosphoenolpyruvate: step 4/7. Functionally, involved in the biosynthesis of the chorismate, which leads to the biosynthesis of aromatic amino acids. Catalyzes the reversible NADPH linked reduction of 3-dehydroshikimate (DHSA) to yield shikimate (SA). The sequence is that of Shikimate dehydrogenase (NADP(+)) from Streptococcus pyogenes serotype M28 (strain MGAS6180).